A 407-amino-acid polypeptide reads, in one-letter code: Probable tRNA sulfurtransferase (407 aa).

One can recognise a THUMP domain in the interval 61 to 165 (NEITYRLSKI…LDAIYMYEEV (105 aa)). ATP contacts are provided by residues 183–184 (ML), 208–209 (HF), Arg-265, Gly-287, and Gln-296.

This sequence belongs to the ThiI family.

It is found in the cytoplasm. The enzyme catalyses [ThiI sulfur-carrier protein]-S-sulfanyl-L-cysteine + a uridine in tRNA + 2 reduced [2Fe-2S]-[ferredoxin] + ATP + H(+) = [ThiI sulfur-carrier protein]-L-cysteine + a 4-thiouridine in tRNA + 2 oxidized [2Fe-2S]-[ferredoxin] + AMP + diphosphate. The catalysed reaction is [ThiS sulfur-carrier protein]-C-terminal Gly-Gly-AMP + S-sulfanyl-L-cysteinyl-[cysteine desulfurase] + AH2 = [ThiS sulfur-carrier protein]-C-terminal-Gly-aminoethanethioate + L-cysteinyl-[cysteine desulfurase] + A + AMP + 2 H(+). It functions in the pathway cofactor biosynthesis; thiamine diphosphate biosynthesis. Catalyzes the ATP-dependent transfer of a sulfur to tRNA to produce 4-thiouridine in position 8 of tRNAs, which functions as a near-UV photosensor. Also catalyzes the transfer of sulfur to the sulfur carrier protein ThiS, forming ThiS-thiocarboxylate. This is a step in the synthesis of thiazole, in the thiamine biosynthesis pathway. The sulfur is donated as persulfide by IscS. The sequence is that of Probable tRNA sulfurtransferase from Staphylococcus aureus (strain JH1).